Consider the following 343-residue polypeptide: Anthranilate phosphoribosyltransferase (343 aa).

Residues Gly83, 86–87 (GD), Thr91, 93–96 (NIST), 111–119 (KHGGRSVSS), and Ser123 each bind 5-phospho-alpha-D-ribose 1-diphosphate. Gly83 contacts anthranilate. Ser95 is a binding site for Mg(2+). Anthranilate is bound at residue Arg169. Mg(2+) contacts are provided by Asp228 and Glu229.

The protein belongs to the anthranilate phosphoribosyltransferase family. In terms of assembly, homodimer. It depends on Mg(2+) as a cofactor.

The catalysed reaction is N-(5-phospho-beta-D-ribosyl)anthranilate + diphosphate = 5-phospho-alpha-D-ribose 1-diphosphate + anthranilate. Its pathway is amino-acid biosynthesis; L-tryptophan biosynthesis; L-tryptophan from chorismate: step 2/5. Functionally, catalyzes the transfer of the phosphoribosyl group of 5-phosphorylribose-1-pyrophosphate (PRPP) to anthranilate to yield N-(5'-phosphoribosyl)-anthranilate (PRA). The sequence is that of Anthranilate phosphoribosyltransferase from Thiobacillus denitrificans (strain ATCC 25259 / T1).